A 309-amino-acid polypeptide reads, in one-letter code: Taste receptor type 2 member 46 (309 aa).

Position 1 (M1) is a topological domain, extracellular. A helical membrane pass occupies residues 2–22 (ITFLPIIFSILIVVTFVIGNF). Residues 23-46 (ANGFIALANSIEWFKRQKISFADQ) lie on the Cytoplasmic side of the membrane. Residues 47 to 67 (ILTALAVSRVGLLWVLLLNWY) traverse the membrane as a helical segment. At 68 to 86 (ATELNPAFYSIEVRITAYN) the chain is on the extracellular side. Residues 87–107 (LWAVINHFSNWLATSLSIFYL) traverse the membrane as a helical segment. The Cytoplasmic portion of the chain corresponds to 108 to 126 (LKIANFSNLIFLCLKRRVK). A helical transmembrane segment spans residues 127–147 (SVVLVILLGPLLFLVCHLFVI). Topologically, residues 148–178 (NMNQIIWTKEYEGNMTWKIKLRSAMYLSNTT) are extracellular. N-linked (GlcNAc...) asparagine glycans are attached at residues N161 and N176. The helical transmembrane segment at 179–199 (VTILANLVPFTLTLISFLLLI) threads the bilayer. The Cytoplasmic portion of the chain corresponds to 200 to 229 (CSLCKHLEKMQLHGKGSQDPSMKVHIKALQ). The helical transmembrane segment at 230–250 (TVTSFLLLCAIYFLSIIMSVW) threads the bilayer. Residues 251–259 (SFESLENKP) lie on the Extracellular side of the membrane. A helical transmembrane segment spans residues 260 to 280 (VFMFCEAITFSYPSTHPFILI). At 281-309 (WGNKKLKQTFLSVLWHVRYWVKGEKPSXP) the chain is on the cytoplasmic side.

The protein belongs to the G-protein coupled receptor T2R family.

It is found in the membrane. Its subcellular location is the cell projection. The protein localises to the cilium membrane. Functionally, receptor that may play a role in the perception of bitterness and is gustducin-linked. May play a role in sensing the chemical composition of the gastrointestinal content. The activity of this receptor may stimulate alpha gustducin, mediate PLC-beta-2 activation and lead to the gating of TRPM5. In airway epithelial cells, binding of bitter compounds increases the intracellular calcium ion concentration and stimulates ciliary beat frequency. In Pan troglodytes (Chimpanzee), this protein is Taste receptor type 2 member 46 (TAS2R46).